Here is a 262-residue protein sequence, read N- to C-terminus: Zinc import ATP-binding protein ZnuC (262 aa).

An ABC transporter domain is found at 5-220 (IELQDICVDF…PSYLAMFGHR (216 aa)). 37–44 (GPNGAGKS) contributes to the ATP binding site.

It belongs to the ABC transporter superfamily. Zinc importer (TC 3.A.1.15.5) family. In terms of assembly, the complex is composed of two ATP-binding proteins (ZnuC), two transmembrane proteins (ZnuB) and a solute-binding protein (ZnuA).

Its subcellular location is the cell inner membrane. It carries out the reaction Zn(2+)(out) + ATP(in) + H2O(in) = Zn(2+)(in) + ADP(in) + phosphate(in) + H(+)(in). Its function is as follows. Part of the ABC transporter complex ZnuABC involved in zinc import. Responsible for energy coupling to the transport system. The chain is Zinc import ATP-binding protein ZnuC from Vibrio cholerae serotype O1 (strain ATCC 39315 / El Tor Inaba N16961).